The following is a 138-amino-acid chain: Nucleoside diphosphate kinase (138 aa).

ATP contacts are provided by Lys9, Phe57, Arg85, Thr91, Arg102, and Asn112. Residue His115 is the Pros-phosphohistidine intermediate of the active site.

It belongs to the NDK family. Homotetramer. Requires Mg(2+) as cofactor.

It localises to the cytoplasm. It carries out the reaction a 2'-deoxyribonucleoside 5'-diphosphate + ATP = a 2'-deoxyribonucleoside 5'-triphosphate + ADP. It catalyses the reaction a ribonucleoside 5'-diphosphate + ATP = a ribonucleoside 5'-triphosphate + ADP. Major role in the synthesis of nucleoside triphosphates other than ATP. The ATP gamma phosphate is transferred to the NDP beta phosphate via a ping-pong mechanism, using a phosphorylated active-site intermediate. The sequence is that of Nucleoside diphosphate kinase from Deinococcus geothermalis (strain DSM 11300 / CIP 105573 / AG-3a).